Consider the following 200-residue polypeptide: Dephospho-CoA kinase (200 aa).

The DPCK domain occupies 4–200; sequence VIGLTGGIAS…AILKKWNIID (197 aa). 12 to 17 serves as a coordination point for ATP; it reads ASGKST.

Belongs to the CoaE family.

The protein localises to the cytoplasm. It catalyses the reaction 3'-dephospho-CoA + ATP = ADP + CoA + H(+). Its pathway is cofactor biosynthesis; coenzyme A biosynthesis; CoA from (R)-pantothenate: step 5/5. Catalyzes the phosphorylation of the 3'-hydroxyl group of dephosphocoenzyme A to form coenzyme A. This is Dephospho-CoA kinase from Bacillus thuringiensis subsp. konkukian (strain 97-27).